The chain runs to 70 residues: U2-agatoxin-Ao1a (70 aa).

The first 20 residues, 1 to 20 (MRAIISLFLISAMVFSMIQA), serve as a signal peptide directing secretion. The propeptide occupies 21–34 (VPEEEGLQLSEDER). Disulfide bonds link Cys-37–Cys-53, Cys-44–Cys-58, and Cys-52–Cys-68. A Leucine amide modification is found at Leu-69.

Belongs to the neurotoxin 01 (U2-agtx) family. Expressed by the venom gland.

It localises to the secreted. Functionally, insect active toxin causing rapid but reversible paralysis in crickets. No activity shown in mammals. Suppresses the excitatory postsynaptic potentials evoked in lobster neuromuscular synaptic preparations, possibly by blocking the presynaptic calcium channel. Induces instantaneous reversible paralysis when injected into crickets. Does not show effect on mammalian Cav2.1/CACNA1A, Cav2.2/CACNA1B and Cav2.3/CACNA1E. The sequence is that of U2-agatoxin-Ao1a from Agelena orientalis (Funnel-web spider).